Consider the following 404-residue polypeptide: G2/mitotic-specific cyclin-B1 (404 aa).

The protein belongs to the cyclin family. Cyclin AB subfamily. In terms of assembly, interacts with the CDK1 protein kinase to form a serine/threonine kinase holoenzyme complex also known as maturation promoting factor (MPF). The cyclin subunit imparts substrate specificity to the complex.

Essential for the control of the cell cycle at the G2/M (mitosis) transition. This chain is G2/mitotic-specific cyclin-B1 (ccnb1), found in Oryzias latipes (Japanese rice fish).